Consider the following 728-residue polypeptide: Phosphoribosylformylglycinamidine synthase subunit PurL (728 aa).

His54 is a catalytic residue. ATP is bound by residues Tyr57 and Lys96. Position 98 (Glu98) interacts with Mg(2+). Residues 99–102 and Arg121 each bind substrate; that span reads SHNH. His100 functions as the Proton acceptor in the catalytic mechanism. Asp122 contributes to the Mg(2+) binding site. Gln245 serves as a coordination point for substrate. Asp273 serves as a coordination point for Mg(2+). 317 to 319 contacts substrate; the sequence is ETQ. The ATP site is built by Asp495 and Gly532. Asn533 provides a ligand contact to Mg(2+). Ser535 is a substrate binding site.

This sequence belongs to the FGAMS family. In terms of assembly, monomer. Part of the FGAM synthase complex composed of 1 PurL, 1 PurQ and 2 PurS subunits.

It localises to the cytoplasm. It catalyses the reaction N(2)-formyl-N(1)-(5-phospho-beta-D-ribosyl)glycinamide + L-glutamine + ATP + H2O = 2-formamido-N(1)-(5-O-phospho-beta-D-ribosyl)acetamidine + L-glutamate + ADP + phosphate + H(+). The protein operates within purine metabolism; IMP biosynthesis via de novo pathway; 5-amino-1-(5-phospho-D-ribosyl)imidazole from N(2)-formyl-N(1)-(5-phospho-D-ribosyl)glycinamide: step 1/2. Its function is as follows. Part of the phosphoribosylformylglycinamidine synthase complex involved in the purines biosynthetic pathway. Catalyzes the ATP-dependent conversion of formylglycinamide ribonucleotide (FGAR) and glutamine to yield formylglycinamidine ribonucleotide (FGAM) and glutamate. The FGAM synthase complex is composed of three subunits. PurQ produces an ammonia molecule by converting glutamine to glutamate. PurL transfers the ammonia molecule to FGAR to form FGAM in an ATP-dependent manner. PurS interacts with PurQ and PurL and is thought to assist in the transfer of the ammonia molecule from PurQ to PurL. In Macrococcus caseolyticus (strain JCSC5402) (Macrococcoides caseolyticum), this protein is Phosphoribosylformylglycinamidine synthase subunit PurL.